We begin with the raw amino-acid sequence, 462 residues long: Neuronal acetylcholine receptor subunit non-alpha-2 (462 aa).

A signal peptide spans 1–30 (MTLAVIGLFTLFTSIIAITPAREFVSLAER). Residues 31–234 (EDALLRELFQ…ITYSFILKRL (204 aa)) lie on the Extracellular side of the membrane. 2 N-linked (GlcNAc...) asparagine glycosylation sites follow: N53 and N168. C155 and C169 form a disulfide bridge. Transmembrane regions (helical) follow at residues 235–259 (PLFY…VFYL), 267–284 (VSLS…LLVI), and 301–322 (YLLF…VINV). The Cytoplasmic portion of the chain corresponds to 323–428 (HHRSSATYHP…WKFVAQVLDR (106 aa)). Positions 362 to 372 (ELEPHSPDLKP) are enriched in basic and acidic residues. Residues 362 to 384 (ELEPHSPDLKPRNKKGPPGPEGE) form a disordered region. The helical transmembrane segment at 429–446 (IFLWTFLTVSVLGTILIF) threads the bilayer.

It belongs to the ligand-gated ion channel (TC 1.A.9) family. Acetylcholine receptor (TC 1.A.9.1) subfamily. As to quaternary structure, neuronal AChR seems to be composed of two different type of subunits: alpha and beta.

Its subcellular location is the postsynaptic cell membrane. It is found in the cell membrane. After binding acetylcholine, the AChR responds by an extensive change in conformation that affects all subunits and leads to opening of an ion-conducting channel across the plasma membrane. This chain is Neuronal acetylcholine receptor subunit non-alpha-2, found in Carassius auratus (Goldfish).